The chain runs to 447 residues: Nisin biosynthesis sensor protein NisK (447 aa).

The next 2 helical transmembrane spans lie at 15-35 (VIEI…LTFF) and 147-167 (TYLF…YHLI). Residues 235–447 (ALSHDVKTPL…GAEVILKIKK (213 aa)) form the Histidine kinase domain. His238 is modified (phosphohistidine; by autocatalysis).

It is found in the cell membrane. The enzyme catalyses ATP + protein L-histidine = ADP + protein N-phospho-L-histidine.. In terms of biological role, member of the two-component regulatory system NisK/NisR involved in the regulation of the biosynthesis of lantibiotic nisin. NisK may function as a membrane-associated protein kinase that phosphorylates NisR in response to environmental signals. This is Nisin biosynthesis sensor protein NisK (nisK) from Lactococcus lactis subsp. lactis (Streptococcus lactis).